A 540-amino-acid polypeptide reads, in one-letter code: Isocitrate lyase (540 aa).

103–105 (SGW) is a binding site for substrate. Position 187 (D187) interacts with Mg(2+). C225 serves as the catalytic Proton acceptor. Residues 226–227 (GH), 385–389 (NNSPS), and T458 each bind substrate.

It belongs to the isocitrate lyase/PEP mutase superfamily. Isocitrate lyase family. As to quaternary structure, homotetramer. Mg(2+) is required as a cofactor.

The enzyme catalyses D-threo-isocitrate = glyoxylate + succinate. It functions in the pathway carbohydrate metabolism; glyoxylate cycle; (S)-malate from isocitrate: step 1/2. It participates in one-carbon metabolism; formaldehyde assimilation via serine pathway. In the presence of magnesium, inhibited by oxalate, potassium cyanide, manganese, silver, cadmium and to a lesser extent by succinate, glycolate, iodoacetamide, DL-penicillamine, aluminum, sodium, potassium, lithium and strontium. In terms of biological role, involved in the metabolic adaptation in response to environmental changes. Catalyzes the reversible formation of succinate and glyoxylate from isocitrate, a key step of the glyoxylate cycle, which operates as an anaplerotic route for replenishing the tricarboxylic acid cycle during growth on fatty acid substrates. May be involved in the assimilation of one-carbon compounds via the isocitrate lyase-positive serine pathway. The sequence is that of Isocitrate lyase from Hyphomicrobium methylovorum.